An 86-amino-acid chain; its full sequence is Neurotoxin 3FTx-8a (86 aa).

The N-terminal stretch at 1–21 (MKTLLLTLVVVTIVCLDLGYT) is a signal peptide. 5 disulfides stabilise this stretch: Cys-24/Cys-45, Cys-27/Cys-32, Cys-38/Cys-63, Cys-67/Cys-78, and Cys-79/Cys-84.

As to expression, expressed by the venom gland.

Its subcellular location is the secreted. Binds with low affinity to muscular (alpha-1-beta-1-delta-epsilon/CHRNA1-CHRNB1-CHRND-CHRNE) and very low affinity to neuronal (alpha-7/CHRNA7) nicotinic acetylcholine receptor (nAChR). The protein is Neurotoxin 3FTx-8a of Bungarus fasciatus (Banded krait).